A 164-amino-acid polypeptide reads, in one-letter code: Peptidyl-prolyl cis-trans isomerase CYP18-2 (164 aa).

One can recognise a PPIase cyclophilin-type domain in the interval 12–162 (VTLETSMGPF…HEVKILRTKV (151 aa)).

Belongs to the cyclophilin-type PPIase family. In terms of tissue distribution, ubiquitous.

Its subcellular location is the cytoplasm. It catalyses the reaction [protein]-peptidylproline (omega=180) = [protein]-peptidylproline (omega=0). Functionally, PPIases accelerate the folding of proteins. It catalyzes the cis-trans isomerization of proline imidic peptide bonds in oligopeptides. This Arabidopsis thaliana (Mouse-ear cress) protein is Peptidyl-prolyl cis-trans isomerase CYP18-2 (CYP18-2).